A 363-amino-acid polypeptide reads, in one-letter code: MSAIYNFCAGPAMLPAAVMKKAQQELLDWNGQGVSVMEISHRSKEFIALTEQAESDLRELMQIPANYHVLFMHGGGRGQFSAVVNNFLGEQGKALYLVSGQWSSAALAEAQKLAGEAQIDSLNIVEKHNGLNAVVLPDLHKIDADYRYVHYCPNETVDGIEIFDELDSPWPIVADLSSTIMSREIDVSRYGLIYAGAQKNIGPSGLSIVIVRDDMLKLPSLPQSSIMDYRLAVEHDSMFNTPPTFAWYLAAEVFAWLKSTGGISSIAKINQQKAQMLYQCIDGNAFYRNGVVAANRSQMNVTFQLVNEALDGEFLKQAQIAGLVALKGHRIVGGMRASLYNAMPLDGIVALVKFMNEFAAKHS.

An L-glutamate-binding site is contributed by Arg-42. Pyridoxal 5'-phosphate is bound by residues 76–77 (GR), Trp-102, Thr-156, Asp-175, and Gln-198. An N6-(pyridoxal phosphate)lysine modification is found at Lys-199. 240–241 (NT) is a binding site for pyridoxal 5'-phosphate.

Belongs to the class-V pyridoxal-phosphate-dependent aminotransferase family. SerC subfamily. Homodimer. Requires pyridoxal 5'-phosphate as cofactor.

It is found in the cytoplasm. The catalysed reaction is O-phospho-L-serine + 2-oxoglutarate = 3-phosphooxypyruvate + L-glutamate. It carries out the reaction 4-(phosphooxy)-L-threonine + 2-oxoglutarate = (R)-3-hydroxy-2-oxo-4-phosphooxybutanoate + L-glutamate. It functions in the pathway amino-acid biosynthesis; L-serine biosynthesis; L-serine from 3-phospho-D-glycerate: step 2/3. It participates in cofactor biosynthesis; pyridoxine 5'-phosphate biosynthesis; pyridoxine 5'-phosphate from D-erythrose 4-phosphate: step 3/5. Its function is as follows. Catalyzes the reversible conversion of 3-phosphohydroxypyruvate to phosphoserine and of 3-hydroxy-2-oxo-4-phosphonooxybutanoate to phosphohydroxythreonine. This Shewanella baltica (strain OS195) protein is Phosphoserine aminotransferase.